A 589-amino-acid chain; its full sequence is Probable 9-cis-epoxycarotenoid dioxygenase NCED5, chloroplastic (589 aa).

The N-terminal 45 residues, 1–45 (MACSYILTPNPTKLNLSFAPSDLDAPSPSSSVSFTNTKPRRRKLS), are a transit peptide targeting the chloroplast. The segment covering 21-34 (SDLDAPSPSSSVSF) has biased composition (low complexity). The segment at 21-51 (SDLDAPSPSSSVSFTNTKPRRRKLSANSVSD) is disordered. 4 residues coordinate Fe cation: His-287, His-336, His-401, and His-576.

It belongs to the carotenoid oxygenase family. In terms of assembly, interacts in vitro with VAR3. Requires Fe(2+) as cofactor. Detected only in seeds.

The protein localises to the plastid. It is found in the chloroplast thylakoid membrane. The catalysed reaction is a 9-cis-epoxycarotenoid + O2 = a 12'-apo-carotenal + 2-cis,4-trans-xanthoxin. The enzyme catalyses 9-cis-violaxanthin + O2 = (3S,5R,6S)-5,6-epoxy-3-hydroxy-5,6-dihydro-12'-apo-beta-caroten-12'-al + 2-cis,4-trans-xanthoxin. It catalyses the reaction 9'-cis-neoxanthin + O2 = (3S,5R,6R)-3,5-dihydroxy-6,7-didehydro-5,6-dihydro-12'-apo-beta-caroten-12'-al + 2-cis,4-trans-xanthoxin. Has a 11,12(11',12') 9-cis epoxycarotenoid cleavage activity. Catalyzes the first step of abscisic-acid biosynthesis from carotenoids. The polypeptide is Probable 9-cis-epoxycarotenoid dioxygenase NCED5, chloroplastic (NCED5) (Arabidopsis thaliana (Mouse-ear cress)).